Here is a 346-residue protein sequence, read N- to C-terminus: UDP-N-acetylenolpyruvoylglucosamine reductase (346 aa).

The region spanning 18–189 is the FAD-binding PCMH-type domain; the sequence is LHAQARAFIA…VSVVFALKTH (172 aa). R165 is a catalytic residue. Residue S240 is the Proton donor of the active site. E336 is an active-site residue.

This sequence belongs to the MurB family. It depends on FAD as a cofactor.

It localises to the cytoplasm. It carries out the reaction UDP-N-acetyl-alpha-D-muramate + NADP(+) = UDP-N-acetyl-3-O-(1-carboxyvinyl)-alpha-D-glucosamine + NADPH + H(+). It functions in the pathway cell wall biogenesis; peptidoglycan biosynthesis. Its function is as follows. Cell wall formation. The protein is UDP-N-acetylenolpyruvoylglucosamine reductase of Neisseria gonorrhoeae (strain ATCC 700825 / FA 1090).